Consider the following 49-residue polypeptide: MRVTITLECTQCKHRNYTTTKNKKNDPGRLELKKYCPYCNAHTVHKETK.

This sequence belongs to the bacterial ribosomal protein bL33 family.

This chain is Large ribosomal subunit protein bL33, found in Carboxydothermus hydrogenoformans (strain ATCC BAA-161 / DSM 6008 / Z-2901).